We begin with the raw amino-acid sequence, 476 residues long: Siroheme synthase (476 aa).

The interval 1–207 is precorrin-2 dehydrogenase /sirohydrochlorin ferrochelatase; sequence MTANVLFPLF…QRHAEAEAVL (207 aa). NAD(+) contacts are provided by residues 25-26 and 46-47; these read KV and PS. S132 is modified (phosphoserine). The tract at residues 220 to 476 is uroporphyrinogen-III C-methyltransferase; that stretch reads GSVTLVGAGA…SAPCPPALIL (257 aa). The active-site Proton acceptor is D252. K274 acts as the Proton donor in catalysis. Residues 305-307, V310, 335-336, M387, and G416 contribute to the S-adenosyl-L-methionine site; these read GGD and TA.

This sequence in the N-terminal section; belongs to the precorrin-2 dehydrogenase / sirohydrochlorin ferrochelatase family. It in the C-terminal section; belongs to the precorrin methyltransferase family.

The catalysed reaction is uroporphyrinogen III + 2 S-adenosyl-L-methionine = precorrin-2 + 2 S-adenosyl-L-homocysteine + H(+). It catalyses the reaction precorrin-2 + NAD(+) = sirohydrochlorin + NADH + 2 H(+). The enzyme catalyses siroheme + 2 H(+) = sirohydrochlorin + Fe(2+). It functions in the pathway cofactor biosynthesis; adenosylcobalamin biosynthesis; precorrin-2 from uroporphyrinogen III: step 1/1. It participates in cofactor biosynthesis; adenosylcobalamin biosynthesis; sirohydrochlorin from precorrin-2: step 1/1. The protein operates within porphyrin-containing compound metabolism; siroheme biosynthesis; precorrin-2 from uroporphyrinogen III: step 1/1. Its pathway is porphyrin-containing compound metabolism; siroheme biosynthesis; siroheme from sirohydrochlorin: step 1/1. It functions in the pathway porphyrin-containing compound metabolism; siroheme biosynthesis; sirohydrochlorin from precorrin-2: step 1/1. Its function is as follows. Multifunctional enzyme that catalyzes the SAM-dependent methylations of uroporphyrinogen III at position C-2 and C-7 to form precorrin-2 via precorrin-1. Then it catalyzes the NAD-dependent ring dehydrogenation of precorrin-2 to yield sirohydrochlorin. Finally, it catalyzes the ferrochelation of sirohydrochlorin to yield siroheme. The polypeptide is Siroheme synthase (Xylella fastidiosa (strain 9a5c)).